The sequence spans 116 residues: Ly-6/neurotoxin-like protein 1 (116 aa).

The signal sequence occupies residues 1–20 (MTPLLTLILVVLMGLPLAQA). One can recognise a UPAR/Ly6 domain in the interval 21-105 (LDCHVCAYNG…LATPATLALA (85 aa)). Disulfide bonds link C23–C46, C26–C33, C39–C64, C68–C85, and C86–C91. The GPI-anchor amidated asparagine moiety is linked to residue N92. The propeptide at 93–116 (GAGLATPATLALAPILLATLWGLL) is removed in mature form.

As to quaternary structure, interacts with nAChRs containing alpha-4:beta-2 (CHRNA4:CHRNB2) and alpha-7 (CHRNA7) subunits. Interacts with CHRNA4 probably in the endoplasmic reticulum prior to nAChR pentameric assembly. Interacts with KCNA2/Potassium voltage-gated channel subfamily A member 2.

It is found in the cell membrane. It localises to the cell projection. The protein resides in the dendrite. Its subcellular location is the endoplasmic reticulum. Functionally, acts in different tissues through interaction to nicotinic acetylcholine receptors (nAChRs). The proposed role as modulator of nAChR activity seems to be dependent on the nAChR subtype and stoichiometry, and to involve an effect on nAChR trafficking and its cell surface expression, and on single channel properties of the nAChR inserted in the plasma membrane. Modulates functional properties of nicotinic acetylcholine receptors (nAChRs) to prevent excessive excitation, and hence neurodegeneration. Enhances desensitization by increasing both the rate and extent of desensitization of alpha-4:beta-2-containing nAChRs and slowing recovery from desensitization. Promotes large amplitude ACh-evoked currents through alpha-4:beta-2 nAChRs. Is involved in regulation of the nAChR pentameric assembly in the endoplasmic reticulum. Shifts stoichiometry from high sensitivity alpha-4(2):beta-2(3) to low sensitivity alpha-4(3):beta-2(2) nAChR. In vitro modulates alpha-3:beta-4-containing nAChRs. Reduces cell surface expression of (alpha-3:beta-4)(2):beta-4 and (alpha-3:beta-4)(2):alpha-5 nAChRs suggesting an interaction with nAChR alpha-3(-):(+)beta-4 subunit interfaces and an allosteric mode. Corresponding single channel effects characterized by decreased unitary conductance, altered burst proportions and enhanced desensitization/inactivation seem to depend on nAChR alpha:alpha subunit interfaces and are greater in (alpha-3:beta-2)(2):alpha-3 when compared to (alpha-3:beta-2)(2):alpha-5 nAChRs. Prevents plasticity in the primary visual cortex late in life. This chain is Ly-6/neurotoxin-like protein 1, found in Pan troglodytes (Chimpanzee).